The primary structure comprises 95 residues: Opiscorpine-1 (95 aa).

The N-terminal stretch at 1–19 (MNNKLTALIFLGLLAIASC) is a signal peptide. Positions 55–95 (EFMCVANVDMTKSCDTHCQKASGEKGYCHGTKCKCGVPLSY) constitute a BetaSPN-type CS-alpha/beta domain. Disulfide bonds link cysteine 58-cysteine 82, cysteine 68-cysteine 87, and cysteine 72-cysteine 89.

This sequence belongs to the long chain scorpion toxin family. Class 3 subfamily. In terms of tissue distribution, expressed by the venom gland.

It is found in the secreted. Functionally, the short synthetic peptide (20-54) has antimicrobial activity against the yeasts F.culmorum (IC(50)=8.8 uM) and F.oxysporum (IC(50)=10 uM), and the Gram-negative bacteria E.coli. The chain is Opiscorpine-1 from Opistophthalmus carinatus (African yellow leg scorpion).